Here is a 304-residue protein sequence, read N- to C-terminus: Non-specific ribonucleoside hydrolase RihC (304 aa).

Residue His-233 is part of the active site.

The protein belongs to the IUNH family. RihC subfamily.

Functionally, hydrolyzes both purine and pyrimidine ribonucleosides with a broad-substrate specificity. The chain is Non-specific ribonucleoside hydrolase RihC from Escherichia coli O7:K1 (strain IAI39 / ExPEC).